An 810-amino-acid polypeptide reads, in one-letter code: F-BAR domain only protein 2 (810 aa).

Positions 3-250 (MAYFVENFWG…NMANTTVESL (248 aa)) constitute an F-BAR domain. The tract at residues 3–274 (MAYFVENFWG…PGLIEFEECD (272 aa)) is mediates dimerization and binding to membranes enriched in Pi(4,5)-P2 and induces their tubulation. Positions 87–156 (HLDLVRKLQE…CVEQERLKKE (70 aa)) form a coiled coil. Residue lysine 297 forms a Glycyl lysine isopeptide (Lys-Gly) (interchain with G-Cter in SUMO2) linkage. A disordered region spans residues 301-352 (DAESVECPDADSLNIPDVDEEGYSIKPETNQNDTKENHFYSSSDSDSEDEEP). Serine 312 bears the Phosphoserine mark. Threonine 385 is subject to Phosphothreonine. Serine 387, serine 394, and serine 403 each carry phosphoserine. The segment at 403-537 (SNEELTKSKP…VSRGPSPVSL (135 aa)) is disordered. Residues 433–456 (PSLDSSSSSSLTSSSSARPTTPLS) show a composition bias toward low complexity. Residues serine 488, serine 493, serine 496, serine 508, serine 510, serine 511, and serine 533 each carry the phosphoserine modification. The span at 502 to 521 (PLARAESSSSISSSASLSAA) shows a compositional bias: low complexity. Residues 521-810 (ANTPTVGVSR…FATGRYLADC (290 aa)) are mediates interaction with DAB2, EPS15, EPS15R and ITSN1. The region spanning 542 to 809 (TLPVAVALTE…RFATGRYLAD (268 aa)) is the MHD domain.

Belongs to the FCHO family. Homodimer; disulfide-linked. May form homotetramer. Interacts with AP2A1. Interacts with EPS15, EPS15R, ITSN1 and ITSN2; recruit those scaffolding proteins which in turn may interact with the adaptor protein complex AP-2 at the plasma membrane. Interacts with DAB2 (via DPF motifs); mediates LDL receptor/LDLR endocytosis. In terms of processing, ubiquitinated. Mainly undergoes monoubiquitination but also polyubiquitination.

The protein localises to the membrane. Its subcellular location is the clathrin-coated pit. Its function is as follows. Functions in an early step of clathrin-mediated endocytosis. Has both a membrane binding/bending activity and the ability to recruit proteins essential to the formation of functional clathrin-coated pits. Has a lipid-binding activity with a preference for membranes enriched in phosphatidylserine and phosphoinositides (Pi(4,5) biphosphate) like the plasma membrane. Its membrane-bending activity might be important for the subsequent action of clathrin and adaptors in the formation of clathrin-coated vesicles. Involved in adaptor protein complex AP-2-dependent endocytosis of the transferrin receptor, it also functions in the AP-2-independent endocytosis of the LDL receptor. This Pongo abelii (Sumatran orangutan) protein is F-BAR domain only protein 2 (FCHO2).